A 275-amino-acid chain; its full sequence is 2,3,4,5-tetrahydropyridine-2,6-dicarboxylate N-succinyltransferase (275 aa).

Residues arginine 108 and aspartate 145 each contribute to the substrate site.

The protein belongs to the transferase hexapeptide repeat family. Homotrimer.

Its subcellular location is the cytoplasm. The catalysed reaction is (S)-2,3,4,5-tetrahydrodipicolinate + succinyl-CoA + H2O = (S)-2-succinylamino-6-oxoheptanedioate + CoA. The protein operates within amino-acid biosynthesis; L-lysine biosynthesis via DAP pathway; LL-2,6-diaminopimelate from (S)-tetrahydrodipicolinate (succinylase route): step 1/3. This Ruegeria pomeroyi (strain ATCC 700808 / DSM 15171 / DSS-3) (Silicibacter pomeroyi) protein is 2,3,4,5-tetrahydropyridine-2,6-dicarboxylate N-succinyltransferase.